We begin with the raw amino-acid sequence, 432 residues long: Asparagine--tRNA ligase (432 aa).

Belongs to the class-II aminoacyl-tRNA synthetase family. In terms of assembly, homodimer.

The protein resides in the cytoplasm. It catalyses the reaction tRNA(Asn) + L-asparagine + ATP = L-asparaginyl-tRNA(Asn) + AMP + diphosphate + H(+). The polypeptide is Asparagine--tRNA ligase (Lactobacillus gasseri (strain ATCC 33323 / DSM 20243 / BCRC 14619 / CIP 102991 / JCM 1131 / KCTC 3163 / NCIMB 11718 / NCTC 13722 / AM63)).